Consider the following 718-residue polypeptide: Probable GTP diphosphokinase RSH2, chloroplastic (718 aa).

The transit peptide at Met-1–Arg-68 directs the protein to the chloroplast. Positions Tyr-9–Arg-48 are disordered. Residues Ser-19–Ala-39 show a composition bias toward low complexity. An HD domain is found at Tyr-243 to Met-347.

It belongs to the RelA/SpoT family.

The protein localises to the plastid. It is found in the chloroplast. The enzyme catalyses GTP + ATP = guanosine 3'-diphosphate 5'-triphosphate + AMP. Functionally, probable ppGpp (guanosine 3'-diphosphate 5'-diphosphate) synthetase that may be involved in a rapid plant ppGpp-mediated response to pathogens and other stresses. In Oryza sativa subsp. japonica (Rice), this protein is Probable GTP diphosphokinase RSH2, chloroplastic (RSH2).